A 458-amino-acid chain; its full sequence is Ectonucleotide pyrophosphatase/phosphodiesterase family member 7 (458 aa).

The signal sequence occupies residues 1 to 21 (MRGPAVLLTVALATLLAPGAG). The Extracellular portion of the chain corresponds to 22-433 (APVQSQGSQN…RPTLLPKGRS (412 aa)). Residues Asp-39 and Thr-75 each coordinate Zn(2+). Residues 72–78 (VTMTSPC) form a required for enzyme activity region. Thr-75 functions as the Nucleophile in the catalytic mechanism. Residue Asn-96 coordinates substrate. N-linked (GlcNAc...) asparagine glycans are attached at residues Asn-100, Asn-121, Asn-146, and Asn-168. 4 residues coordinate Zn(2+): Asp-199, His-203, Asp-246, and His-247. Asn-267 is a glycosylation site (N-linked (GlcNAc...) asparagine). His-353 is a binding site for Zn(2+). A helical transmembrane segment spans residues 434-454 (ALPPSSRPLLVMGLLGTVILL). The Cytoplasmic portion of the chain corresponds to 455–458 (SEVA).

The protein belongs to the nucleotide pyrophosphatase/phosphodiesterase family. Requires Zn(2+) as cofactor. Post-translationally, N-glycosylated; required for activity and transport to the plasma membrane. Detected in the colon (at protein level). Expressed in the duodenum, jejunum and liver and at low levels in the ileum. Expression was very low in the esophagus, stomach and colon.

It localises to the cell membrane. The catalysed reaction is a sphingomyelin + H2O = phosphocholine + an N-acylsphing-4-enine + H(+). It catalyses the reaction 1-hexadecanoyl-sn-glycero-3-phosphocholine + H2O = 1-hexadecanoyl-sn-glycerol + phosphocholine + H(+). The enzyme catalyses a 1-O-alkyl-2-acetyl-sn-glycero-3-phosphocholine + H2O = a 1-O-alkyl-2-acetyl-sn-glycerol + phosphocholine + H(+). It carries out the reaction 1-O-octadecyl-2-acetyl-sn-glycero-3-phosphocholine + H2O = 1-O-octadecyl-2-acetyl-sn-glycerol + phosphocholine + H(+). With respect to regulation, inhibited in a dose dependent manner by ATP, imidazole, orthovanadate and zinc ion. Not inhibited by ADP, AMP and EDTA. Functionally, choline-specific phosphodiesterase that hydrolyzes sphingomyelin releasing the ceramide and phosphocholine and therefore is involved in sphingomyelin digestion, ceramide formation, and fatty acid (FA) absorption in the gastrointestinal tract. Also has phospholipase C activity and can also cleave phosphocholine from palmitoyl lyso-phosphatidylcholine and platelet-activating factor (PAF) leading to its inactivation. Does not have nucleotide pyrophosphatase activity. May promote cholesterol absorption by affecting the levels of sphingomyelin derived from either diet or endogenous sources, in the intestinal lumen. This Homo sapiens (Human) protein is Ectonucleotide pyrophosphatase/phosphodiesterase family member 7.